Reading from the N-terminus, the 488-residue chain is Zinc metalloproteinase-disintegrin 8 (488 aa).

The N-terminal stretch at 1 to 20 is a signal peptide; the sequence is MIQVLLVTICLAVFPYQGSS. Positions 21–191 are excised as a propeptide; the sequence is IILESGNVND…KASQLNLPPE (171 aa). The Peptidase M12B domain occupies 198 to 396; sequence TYIELVVVAD…STTRCLHNEP (199 aa). 2 residues coordinate Ca(2+): Glu201 and Asp285. The N-linked (GlcNAc...) asparagine glycan is linked to Asn296. Cystine bridges form between Cys309/Cys391, Cys349/Cys373, and Cys351/Cys356. His334 is a Zn(2+) binding site. The active site involves Glu335. 2 residues coordinate Zn(2+): His338 and His344. Ca(2+) is bound by residues Cys391, Asn394, Asn409, Glu413, Glu416, and Asp419. Positions 404-488 constitute a Disintegrin domain; that stretch reads PPFCGNYFKE…ADCPRNGLYG (85 aa). 7 cysteine pairs are disulfide-bonded: Cys407–Cys426, Cys418–Cys436, Cys420–Cys431, Cys430–Cys453, Cys444–Cys450, Cys449–Cys474, and Cys462–Cys481. Residues 466-468 carry the Cell attachment site motif; the sequence is RGD.

It belongs to the venom metalloproteinase (M12B) family. P-II subfamily. Requires Zn(2+) as cofactor. As to expression, expressed by the venom gland.

It is found in the secreted. Functionally, inhibits ADP-induced platelet aggregation (probably by binding integrin alpha-IIb/beta-3 (ITGA2B/ITGB3)) and degrades fibrinogen. The protein is Zinc metalloproteinase-disintegrin 8 of Crotalus adamanteus (Eastern diamondback rattlesnake).